The primary structure comprises 132 residues: Small ribosomal subunit protein uS8c (132 aa).

This sequence belongs to the universal ribosomal protein uS8 family. Part of the 30S ribosomal subunit.

It localises to the plastid. The protein localises to the chloroplast. Functionally, one of the primary rRNA binding proteins, it binds directly to 16S rRNA central domain where it helps coordinate assembly of the platform of the 30S subunit. This chain is Small ribosomal subunit protein uS8c (rps8), found in Cycas taitungensis (Prince sago).